We begin with the raw amino-acid sequence, 151 residues long: Deoxyuridine 5'-triphosphate nucleotidohydrolase (151 aa).

Substrate is bound by residues 70 to 72, Asn-83, 87 to 89, and Met-97; these read RSG and LID.

The protein belongs to the dUTPase family. Requires Mg(2+) as cofactor.

It carries out the reaction dUTP + H2O = dUMP + diphosphate + H(+). It functions in the pathway pyrimidine metabolism; dUMP biosynthesis; dUMP from dCTP (dUTP route): step 2/2. In terms of biological role, this enzyme is involved in nucleotide metabolism: it produces dUMP, the immediate precursor of thymidine nucleotides and it decreases the intracellular concentration of dUTP so that uracil cannot be incorporated into DNA. The protein is Deoxyuridine 5'-triphosphate nucleotidohydrolase of Pseudomonas putida (strain ATCC 700007 / DSM 6899 / JCM 31910 / BCRC 17059 / LMG 24140 / F1).